A 539-amino-acid chain; its full sequence is CTP synthase (539 aa).

The segment at Met-1–Ile-267 is amidoligase domain. Ser-13 provides a ligand contact to CTP. A UTP-binding site is contributed by Ser-13. Ser-14–Ile-19 lines the ATP pocket. Residue Tyr-54 participates in L-glutamine binding. Asp-71 serves as a coordination point for ATP. Mg(2+) is bound by residues Asp-71 and Glu-141. Residues Asp-148 to Glu-150, Lys-188 to Gln-193, and Lys-224 each bind CTP. Residues Lys-188–Gln-193 and Lys-224 contribute to the UTP site. Residues Lys-294–Asp-537 enclose the Glutamine amidotransferase type-1 domain. Gly-356 contributes to the L-glutamine binding site. Cys-383 serves as the catalytic Nucleophile; for glutamine hydrolysis. L-glutamine contacts are provided by residues Leu-384 to Gln-387, Glu-407, and Arg-465. Residues His-510 and Glu-512 contribute to the active site.

This sequence belongs to the CTP synthase family. As to quaternary structure, homotetramer.

It catalyses the reaction UTP + L-glutamine + ATP + H2O = CTP + L-glutamate + ADP + phosphate + 2 H(+). The enzyme catalyses L-glutamine + H2O = L-glutamate + NH4(+). It carries out the reaction UTP + NH4(+) + ATP = CTP + ADP + phosphate + 2 H(+). The protein operates within pyrimidine metabolism; CTP biosynthesis via de novo pathway; CTP from UDP: step 2/2. Allosterically activated by GTP, when glutamine is the substrate; GTP has no effect on the reaction when ammonia is the substrate. The allosteric effector GTP functions by stabilizing the protein conformation that binds the tetrahedral intermediate(s) formed during glutamine hydrolysis. Inhibited by the product CTP, via allosteric rather than competitive inhibition. In terms of biological role, catalyzes the ATP-dependent amination of UTP to CTP with either L-glutamine or ammonia as the source of nitrogen. Regulates intracellular CTP levels through interactions with the four ribonucleotide triphosphates. The sequence is that of CTP synthase from Lactobacillus delbrueckii subsp. bulgaricus (strain ATCC BAA-365 / Lb-18).